The primary structure comprises 48 residues: Large ribosomal subunit protein bL36c (48 aa).

It belongs to the bacterial ribosomal protein bL36 family.

It is found in the plastid. It localises to the chloroplast. This chain is Large ribosomal subunit protein bL36c, found in Rhodomonas salina (Cryptomonas salina).